Reading from the N-terminus, the 485-residue chain is Dual specificity protein phosphatase CDC14B (485 aa).

A disordered region spans residues 1–38 (MKRKSERRSAWATAPPCSRRSSSSSPGVKKSRSSTPQE). The Nucleolar localization signal signature appears at 1-54 (MKRKSERRSAWATAPPCSRRSSSSSPGVKKSRSSTPQELHRLEQQDDLYLDITD). Residues 15-28 (PPCSRRSSSSSPGV) show a composition bias toward low complexity. An a region spans residues 44-198 (QQDDLYLDIT…AMQYGFFNFN (155 aa)). Residues 199–212 (SFNLDEYEHYEKAE) are linker. A b region spans residues 213–379 (NGDFNWIIPE…EGDYFRQKLR (167 aa)). The 160-residue stretch at 215–374 (DFNWIIPERF…SSLWLEGDYF (160 aa)) folds into the Tyrosine-protein phosphatase domain. The active-site Phosphocysteine intermediate is Cys-314. A disordered region spans residues 402–424 (LNGLENQDNQEPEPYSDDDEVSG). The span at 409–422 (DNQEPEPYSDDDEV) shows a compositional bias: acidic residues.

Belongs to the protein-tyrosine phosphatase family. Non-receptor class CDC14 subfamily. Interacts with FZR1/CDH1.

It localises to the nucleus. The protein localises to the nucleolus. The protein resides in the nucleoplasm. It carries out the reaction O-phospho-L-tyrosyl-[protein] + H2O = L-tyrosyl-[protein] + phosphate. The catalysed reaction is O-phospho-L-seryl-[protein] + H2O = L-seryl-[protein] + phosphate. It catalyses the reaction O-phospho-L-threonyl-[protein] + H2O = L-threonyl-[protein] + phosphate. Dual-specificity phosphatase involved in DNA damage response. Essential regulator of the G2 DNA damage checkpoint: following DNA damage, translocates to the nucleus and dephosphorylates FZR1/CDH1, a key activator of the anaphase promoting complex/cyclosome (APC/C). Dephosphorylates SIRT2 around early anaphase. Dephosphorylation of FZR1/CDH1 activates the APC/C, leading to the ubiquitination of PLK1, preventing entry into mitosis. Preferentially dephosphorylates proteins modified by proline-directed kinases. The chain is Dual specificity protein phosphatase CDC14B (Cdc14b) from Mus musculus (Mouse).